The primary structure comprises 212 residues: ATP-dependent Clp protease proteolytic subunit (212 aa).

Catalysis depends on Ser106, which acts as the Nucleophile. His131 is an active-site residue.

It belongs to the peptidase S14 family. Fourteen ClpP subunits assemble into 2 heptameric rings which stack back to back to give a disk-like structure with a central cavity, resembling the structure of eukaryotic proteasomes.

Its subcellular location is the cytoplasm. The catalysed reaction is Hydrolysis of proteins to small peptides in the presence of ATP and magnesium. alpha-casein is the usual test substrate. In the absence of ATP, only oligopeptides shorter than five residues are hydrolyzed (such as succinyl-Leu-Tyr-|-NHMec, and Leu-Tyr-Leu-|-Tyr-Trp, in which cleavage of the -Tyr-|-Leu- and -Tyr-|-Trp bonds also occurs).. Functionally, cleaves peptides in various proteins in a process that requires ATP hydrolysis. Has a chymotrypsin-like activity. Plays a major role in the degradation of misfolded proteins. The sequence is that of ATP-dependent Clp protease proteolytic subunit from Rhodopseudomonas palustris (strain HaA2).